Consider the following 327-residue polypeptide: Phenylalanine--tRNA ligase alpha subunit (327 aa).

A Mg(2+)-binding site is contributed by Glu-252.

It belongs to the class-II aminoacyl-tRNA synthetase family. Phe-tRNA synthetase alpha subunit type 1 subfamily. In terms of assembly, tetramer of two alpha and two beta subunits. Mg(2+) serves as cofactor.

The protein resides in the cytoplasm. It carries out the reaction tRNA(Phe) + L-phenylalanine + ATP = L-phenylalanyl-tRNA(Phe) + AMP + diphosphate + H(+). The sequence is that of Phenylalanine--tRNA ligase alpha subunit from Shewanella putrefaciens (strain CN-32 / ATCC BAA-453).